Consider the following 458-residue polypeptide: Riboflavin transporter 2 (458 aa).

5 consecutive transmembrane segments (helical) span residues 11-31 (LFGMGSWVAINGIWVELPLIV), 38-58 (WYLPSYLTVLIQMANVGPLFV), 73-93 (PVIYSIVGLGVVATFLLAFFW), 97-117 (VPLAGATHSVPLLVLCFLLSV), and 146-166 (GVSGLVPAVVALVQGVGVVHC). N-linked (GlcNAc...) asparagine glycans are attached at residues Asn-168, Asn-176, Asn-182, and Asn-199. The chain crosses the membrane as a helical span at residues 204–224 (VFFLFLSAMMVVCLAAFLLLN). Positions 249–274 (DQALSLSHRPQEEKPMISSPDSHRRA) are disordered. Transmembrane regions (helical) follow at residues 279–299 (FGTGFYSGPELAFIFVVLAWV), 325–345 (LAATMAAVANPVACFIAMFLP), 349–369 (LVLIGLLTIVGTGFGTYIMAM), 388–408 (IVIAWVLFVLTLSYVKVIIGV), and 417–437 (ALVWCGAVVQLGSMLGALSMF).

Belongs to the riboflavin transporter family.

The protein localises to the cell membrane. The catalysed reaction is riboflavin(in) = riboflavin(out). In terms of biological role, plasma membrane transporter mediating the uptake by cells of the water soluble vitamin B2/riboflavin that plays a key role in biochemical oxidation-reduction reactions of the carbohydrate, lipid, and amino acid metabolism. This is Riboflavin transporter 2 (rft2) from Salmo salar (Atlantic salmon).